A 113-amino-acid chain; its full sequence is Protein crumbs homolog 3 (113 aa).

The N-terminal stretch at 1–24 is a signal peptide; that stretch reads MATPGLGVLLAFGLPMLPSGWSLT. The segment at 23–44 is disordered; it reads LTAPDPFTNSTTQPPGDESNGG. At 25–49 the chain is on the extracellular side; it reads APDPFTNSTTQPPGDESNGGLSSGA. The N-linked (GlcNAc...) asparagine glycan is linked to asparagine 31. The chain crosses the membrane as a helical span at residues 50-70; the sequence is IVAITVVFSILGVLLIAVGLF. The Cytoplasmic segment spans residues 71 to 113; it reads LLMRKLREKRQTEGTYRPSSEEQVGARAPPPPNLKLPPEERLI. The interval 77-113 is interaction with EPB41L5; the sequence is REKRQTEGTYRPSSEEQVGARAPPPPNLKLPPEERLI. The tract at residues 80 to 113 is disordered; that stretch reads RQTEGTYRPSSEEQVGARAPPPPNLKLPPEERLI. Residues 83-92 show a composition bias toward polar residues; it reads EGTYRPSSEE. Residues 110–113 carry the PDZ-binding motif; the sequence is ERLI.

Component of a complex composed of CRB3, PALS1 and PATJ. Interacts (via C-terminus) with PALS1 (via PDZ domain). Interacts with PARD6A. Interacts (via intracellular domain) with EPB41L5. Interacts with WDR83. Expressed in the apical renal tubules (at protein level). Expressed in the retinal pigment epithelium.

It localises to the apical cell membrane. Its subcellular location is the cell junction. It is found in the tight junction. Functionally, involved in the establishment of cell polarity in mammalian epithelial cells. Regulates the morphogenesis of tight junctions. Involved in promoting phosphorylation and cytoplasmic retention of transcriptional coactivators YAP1 and WWTR1/TAZ which leads to suppression of TGFB1-dependent transcription of target genes such as CCN2/CTGF, SERPINE1/PAI1, SNAI1/SNAIL1 and SMAD7. In Mus musculus (Mouse), this protein is Protein crumbs homolog 3 (Crb3).